The chain runs to 240 residues: Orotidine 5'-phosphate decarboxylase (240 aa).

Substrate is bound by residues Asp-15, Lys-37, 64–73, Thr-127, Arg-188, Gln-197, Gly-217, and Arg-218; that span reads DLKYHDIPNT. The Proton donor role is filled by Lys-66.

It belongs to the OMP decarboxylase family. Type 1 subfamily. In terms of assembly, homodimer.

It catalyses the reaction orotidine 5'-phosphate + H(+) = UMP + CO2. Its pathway is pyrimidine metabolism; UMP biosynthesis via de novo pathway; UMP from orotate: step 2/2. Its function is as follows. Catalyzes the decarboxylation of orotidine 5'-monophosphate (OMP) to uridine 5'-monophosphate (UMP). The sequence is that of Orotidine 5'-phosphate decarboxylase from Citrifermentans bemidjiense (strain ATCC BAA-1014 / DSM 16622 / JCM 12645 / Bem) (Geobacter bemidjiensis).